Consider the following 613-residue polypeptide: Zinc finger CCCH domain-containing protein 59 (613 aa).

Positions 275 to 296 (NTTLSPYISPAKSVPVEETPKR) are disordered. C3H1-type zinc fingers lie at residues 318–346 (AGGN…HDEE) and 350–378 (HYNR…HSLS).

The sequence is that of Zinc finger CCCH domain-containing protein 59 from Oryza sativa subsp. japonica (Rice).